A 468-amino-acid polypeptide reads, in one-letter code: Lysosomal dipeptide transporter MFSD1 (468 aa).

The disordered stretch occupies residues 1–25; it reads MEDEEEEARALLPGGSDEAGRETRA. The Dileucine internalization motif motif lies at 11 to 12; that stretch reads LL. 12 helical membrane passes run 42-62, 86-106, 116-136, 138-158, 173-194, 218-238, 270-290, 307-327, 334-354, 364-384, 395-415, and 421-441; these read LAHR…SYFC, LLYA…GFLI, TIIF…GGIF, AFWL…SLAV, LNLV…NMNL, LMIG…LAYL, WLIF…IGLV, AINS…GLLV, IIWV…LAFT, LLGL…AFVV, FMQS…GMIL, and LFLE…VVLL.

The protein belongs to the major facilitator superfamily. Homodimer. Interacts with lysosomal protein GLMP (via lumenal domain); the interaction starts while both proteins are still in the endoplasmic reticulum and is required for stabilization of MFSD1 in lysosomes but has no direct effect on its targeting to lysosomes or transporter activity.

The protein resides in the lysosome membrane. It catalyses the reaction L-alpha-aminoacyl-L-arginine(out) = L-alpha-aminoacyl-L-arginine(in). The enzyme catalyses L-arginyl-L-alpha-amino acid(out) = L-arginyl-L-alpha-amino acid(in). It carries out the reaction L-arginyl-glycine(out) = L-arginyl-glycine(in). The catalysed reaction is L-alpha-aminoacyl-L-lysine(out) = L-alpha-aminoacyl-L-lysine(in). It catalyses the reaction L-aspartyl-L-lysine(out) = L-aspartyl-L-lysine(in). The enzyme catalyses L-alanyl-L-lysine(out) = L-alanyl-L-lysine(in). It carries out the reaction L-lysyl-L-alpha-amino acid(out) = L-lysyl-L-alpha-amino acid(in). The catalysed reaction is L-lysyl-L-alanine(out) = L-lysyl-L-alanine(in). It catalyses the reaction L-lysyl-L-lysine(out) = L-lysyl-L-lysine(in). The enzyme catalyses L-lysyl-glycine(out) = L-lysyl-glycine(in). It carries out the reaction L-alpha-aminoacyl-L-histidine(out) = L-alpha-aminoacyl-L-histidine(in). The catalysed reaction is L-histidyl-L-alpha-amino acid(out) = L-histidyl-L-alpha-amino acid(in). It catalyses the reaction L-histidyl-glycine(out) = L-histidyl-glycine(in). Its function is as follows. Lysosomal dipeptide uniporter that selectively exports lysine, arginine or histidine-containing dipeptides with a net positive charge from the lysosome lumen into the cytosol. Could play a role in a specific type of protein O-glycosylation indirectly regulating macrophages migration and tissue invasion. Also essential for liver homeostasis. The chain is Lysosomal dipeptide transporter MFSD1 from Bos taurus (Bovine).